The primary structure comprises 76 residues: Monocarboxylate transporter 1 (76 aa).

The next 3 helical transmembrane spans lie at 1-18 (LSIL…MGLA), 28-48 (IQYF…LAPL), and 53-73 (IGFC…SSVL). Asp-8 contributes to the H(+) binding site. Arg-12 contacts (S)-lactate.

This sequence belongs to the major facilitator superfamily. Monocarboxylate porter (TC 2.A.1.13) family. Interacts with BSG; interaction mediates SLC16A1 targeting to the plasma membrane. Interacts with EMB; interaction mediates SLC16A1 targeting to the plasma membrane.

The protein localises to the cell membrane. It is found in the basolateral cell membrane. Its subcellular location is the apical cell membrane. The catalysed reaction is (S)-lactate(in) + H(+)(in) = (S)-lactate(out) + H(+)(out). The enzyme catalyses acetate(out) + H(+)(out) = acetate(in) + H(+)(in). It catalyses the reaction acetoacetate(out) + H(+)(out) = acetoacetate(in) + H(+)(in). It carries out the reaction pyruvate(out) + H(+)(out) = pyruvate(in) + H(+)(in). The catalysed reaction is (R)-3-hydroxybutanoate(out) + H(+)(out) = (R)-3-hydroxybutanoate(in) + H(+)(in). The enzyme catalyses 3-methyl-2-oxobutanoate(out) + H(+)(out) = 3-methyl-2-oxobutanoate(in) + H(+)(in). It catalyses the reaction 4-methyl-2-oxopentanoate(out) + H(+)(out) = 4-methyl-2-oxopentanoate(in) + H(+)(in). It carries out the reaction succinate(in) + 2 H(+)(in) = succinate(out) + 2 H(+)(out). Bidirectional proton-coupled monocarboxylate transporter. Catalyzes the rapid transport across the plasma membrane of many monocarboxylates such as lactate, pyruvate, acetate and the ketone bodies acetoacetate and beta-hydroxybutyrate, and thus contributes to the maintenance of intracellular pH. The transport direction is determined by the proton motive force and the concentration gradient of the substrate monocarboxylate. MCT1 is a major lactate exporter. Plays a role in cellular responses to a high-fat diet by modulating the cellular levels of lactate and pyruvate that contribute to the regulation of central metabolic pathways and insulin secretion, with concomitant effects on plasma insulin levels and blood glucose homeostasis. Facilitates the protonated monocarboxylate form of succinate export, that its transient protonation upon muscle cell acidification in exercising muscle and ischemic heart. Functions via alternate outward- and inward-open conformation states. Protonation and deprotonation is essential for the conformational transition. In Meriones unguiculatus (Mongolian jird), this protein is Monocarboxylate transporter 1 (SLC16A1).